An 83-amino-acid polypeptide reads, in one-letter code: Toxin To15 (83 aa).

A signal peptide spans 1 to 19; it reads MKGIILLISCLMLIEVVVG. The LCN-type CS-alpha/beta domain maps to 21–82; the sequence is KEGYPLDSSG…IWNAKTNKCY (62 aa). Intrachain disulfides connect C31–C81, C35–C57, C43–C62, and C47–C64.

It belongs to the long (4 C-C) scorpion toxin superfamily. Sodium channel inhibitor family. Beta subfamily. As to expression, expressed by the venom gland.

It localises to the secreted. Its function is as follows. Beta toxins bind voltage-independently at site-4 of sodium channels (Nav) and shift the voltage of activation toward more negative potentials thereby affecting sodium channel activation and promoting spontaneous and repetitive firing. The polypeptide is Toxin To15 (Tityus obscurus (Amazonian scorpion)).